The primary structure comprises 466 residues: ATP synthase subunit beta (466 aa).

148 to 155 (GGAGVGKT) serves as a coordination point for ATP.

It belongs to the ATPase alpha/beta chains family. In terms of assembly, F-type ATPases have 2 components, CF(1) - the catalytic core - and CF(0) - the membrane proton channel. CF(1) has five subunits: alpha(3), beta(3), gamma(1), delta(1), epsilon(1). CF(0) has three main subunits: a(1), b(2) and c(9-12). The alpha and beta chains form an alternating ring which encloses part of the gamma chain. CF(1) is attached to CF(0) by a central stalk formed by the gamma and epsilon chains, while a peripheral stalk is formed by the delta and b chains.

The protein localises to the cell inner membrane. The catalysed reaction is ATP + H2O + 4 H(+)(in) = ADP + phosphate + 5 H(+)(out). Produces ATP from ADP in the presence of a proton gradient across the membrane. The catalytic sites are hosted primarily by the beta subunits. This Xylella fastidiosa (strain M23) protein is ATP synthase subunit beta.